Here is a 235-residue protein sequence, read N- to C-terminus: 2-C-methyl-D-erythritol 4-phosphate cytidylyltransferase (235 aa).

Belongs to the IspD/TarI cytidylyltransferase family. IspD subfamily.

The enzyme catalyses 2-C-methyl-D-erythritol 4-phosphate + CTP + H(+) = 4-CDP-2-C-methyl-D-erythritol + diphosphate. Its pathway is isoprenoid biosynthesis; isopentenyl diphosphate biosynthesis via DXP pathway; isopentenyl diphosphate from 1-deoxy-D-xylulose 5-phosphate: step 2/6. Catalyzes the formation of 4-diphosphocytidyl-2-C-methyl-D-erythritol from CTP and 2-C-methyl-D-erythritol 4-phosphate (MEP). This chain is 2-C-methyl-D-erythritol 4-phosphate cytidylyltransferase, found in Pseudomonas fluorescens (strain SBW25).